The sequence spans 302 residues: Ribosomal RNA small subunit methyltransferase H (302 aa).

Residues 43-45 (GGH), Asp62, Phe89, Asp105, and His112 contribute to the S-adenosyl-L-methionine site. The disordered stretch occupies residues 276-302 (EIANNPRSRSAKLRIAEKQAETGDEDN).

This sequence belongs to the methyltransferase superfamily. RsmH family.

It localises to the cytoplasm. It carries out the reaction cytidine(1402) in 16S rRNA + S-adenosyl-L-methionine = N(4)-methylcytidine(1402) in 16S rRNA + S-adenosyl-L-homocysteine + H(+). Its function is as follows. Specifically methylates the N4 position of cytidine in position 1402 (C1402) of 16S rRNA. The polypeptide is Ribosomal RNA small subunit methyltransferase H (Nostoc sp. (strain PCC 7120 / SAG 25.82 / UTEX 2576)).